A 100-amino-acid polypeptide reads, in one-letter code: Urease subunit gamma (100 aa).

The protein belongs to the urease gamma subunit family. Heterotrimer of UreA (gamma), UreB (beta) and UreC (alpha) subunits. Three heterotrimers associate to form the active enzyme.

It is found in the cytoplasm. It carries out the reaction urea + 2 H2O + H(+) = hydrogencarbonate + 2 NH4(+). Its pathway is nitrogen metabolism; urea degradation; CO(2) and NH(3) from urea (urease route): step 1/1. The chain is Urease subunit gamma from Rhodopseudomonas palustris (strain ATCC BAA-98 / CGA009).